The sequence spans 367 residues: Probable butyrate kinase (367 aa).

This sequence belongs to the acetokinase family.

The protein localises to the cytoplasm. It carries out the reaction butanoate + ATP = butanoyl phosphate + ADP. The chain is Probable butyrate kinase from Bacillus cereus (strain ATCC 10987 / NRS 248).